We begin with the raw amino-acid sequence, 120 residues long: Large ribosomal subunit protein uL18 (120 aa).

The disordered stretch occupies residues Met1 to Arg26. Positions Ser8–Gly18 are enriched in basic residues.

Belongs to the universal ribosomal protein uL18 family. Part of the 50S ribosomal subunit; part of the 5S rRNA/L5/L18/L25 subcomplex. Contacts the 5S and 23S rRNAs.

Its function is as follows. This is one of the proteins that bind and probably mediate the attachment of the 5S RNA into the large ribosomal subunit, where it forms part of the central protuberance. This chain is Large ribosomal subunit protein uL18, found in Trichormus variabilis (strain ATCC 29413 / PCC 7937) (Anabaena variabilis).